The primary structure comprises 231 residues: Uridylate kinase (231 aa).

6-9 is a binding site for ATP; that stretch reads KLSG. Residues 14 to 19 are involved in allosteric activation by GTP; the sequence is GEGGRG. Residues Gly-49 and Arg-53 each coordinate ATP. Residues Asp-66 and 127–134 contribute to the UMP site; that span reads TSNPFFTT. ATP-binding residues include Thr-154, Tyr-160, and Asp-163.

This sequence belongs to the UMP kinase family. In terms of assembly, homohexamer.

Its subcellular location is the cytoplasm. It catalyses the reaction UMP + ATP = UDP + ADP. It participates in pyrimidine metabolism; CTP biosynthesis via de novo pathway; UDP from UMP (UMPK route): step 1/1. With respect to regulation, allosterically activated by GTP. Inhibited by UTP. Functionally, catalyzes the reversible phosphorylation of UMP to UDP. This Thermotoga maritima (strain ATCC 43589 / DSM 3109 / JCM 10099 / NBRC 100826 / MSB8) protein is Uridylate kinase.